The following is a 146-amino-acid chain: 3-dehydroquinate dehydratase (146 aa).

Tyr-24 acts as the Proton acceptor in catalysis. Substrate is bound by residues Asn-73, His-79, and Asp-86. His-99 functions as the Proton donor in the catalytic mechanism. Substrate contacts are provided by residues 100–101 (LS) and Arg-110.

This sequence belongs to the type-II 3-dehydroquinase family. As to quaternary structure, homododecamer.

The enzyme catalyses 3-dehydroquinate = 3-dehydroshikimate + H2O. The protein operates within metabolic intermediate biosynthesis; chorismate biosynthesis; chorismate from D-erythrose 4-phosphate and phosphoenolpyruvate: step 3/7. Catalyzes a trans-dehydration via an enolate intermediate. The chain is 3-dehydroquinate dehydratase from Shewanella oneidensis (strain ATCC 700550 / JCM 31522 / CIP 106686 / LMG 19005 / NCIMB 14063 / MR-1).